We begin with the raw amino-acid sequence, 101 residues long: NAD(P)H-quinone oxidoreductase subunit 4L, chloroplastic (101 aa).

A run of 3 helical transmembrane segments spans residues Met2–Ile22, Met32–Phe52, and Ile61–Val81.

Belongs to the complex I subunit 4L family. In terms of assembly, NDH is composed of at least 16 different subunits, 5 of which are encoded in the nucleus.

The protein resides in the plastid. It is found in the chloroplast thylakoid membrane. The catalysed reaction is a plastoquinone + NADH + (n+1) H(+)(in) = a plastoquinol + NAD(+) + n H(+)(out). It catalyses the reaction a plastoquinone + NADPH + (n+1) H(+)(in) = a plastoquinol + NADP(+) + n H(+)(out). NDH shuttles electrons from NAD(P)H:plastoquinone, via FMN and iron-sulfur (Fe-S) centers, to quinones in the photosynthetic chain and possibly in a chloroplast respiratory chain. The immediate electron acceptor for the enzyme in this species is believed to be plastoquinone. Couples the redox reaction to proton translocation, and thus conserves the redox energy in a proton gradient. This Gossypium barbadense (Sea Island cotton) protein is NAD(P)H-quinone oxidoreductase subunit 4L, chloroplastic.